A 344-amino-acid chain; its full sequence is MATSVKKLLAGLSGEVFKVPPVWMMRQAGRHLPEYLETRARSKDFLDFCYTPSLASEATLQPIRRYGMDGAILFADILLILDAMGLKVAFEKGEGPLVEQINGPSDLARVSPQKAADRLSPVYETVSRVKAALPAQTTLIGFAGSPWTVSLYAIEGRGKTDKSTAWRWAHGRPDDLAAVMDLVAEATAEYLARQVEAGAEALMLFDSWAEGLPDNIFREVVIAPTRKLVALLRERGITVPIIGFPRGAGVMLPEYVRETGVTAVGLDTAASPAFINAELAKGFPVQGHLDPLLLIEGGARLDARVRELLDAYRGRPHIFNLGHGVRPETPIAHVERVLELIRNA.

Residues 26–30 (RQAGR), D76, Y152, S207, and H323 contribute to the substrate site.

This sequence belongs to the uroporphyrinogen decarboxylase family. Homodimer.

It localises to the cytoplasm. The catalysed reaction is uroporphyrinogen III + 4 H(+) = coproporphyrinogen III + 4 CO2. The protein operates within porphyrin-containing compound metabolism; protoporphyrin-IX biosynthesis; coproporphyrinogen-III from 5-aminolevulinate: step 4/4. Functionally, catalyzes the decarboxylation of four acetate groups of uroporphyrinogen-III to yield coproporphyrinogen-III. This chain is Uroporphyrinogen decarboxylase, found in Hyphomonas neptunium (strain ATCC 15444).